A 1028-amino-acid polypeptide reads, in one-letter code: Unconventional myosin-Ic (1028 aa).

Methionine 1 is modified (N-acetylmethionine). One can recognise a Myosin motor domain in the interval 12 to 696; that stretch reads GVQDFVLLEN…TLFATEDALE (685 aa). Residues asparagine 53, tyrosine 61, 104-113, and 157-161 each bind ATP; these read SGESGAGKTE and NDNSS. Residue lysine 348 is modified to N6-methyllysine. An actin-binding region spans residues 573–595; the sequence is LSKLMEILMSKQPSYVRCIKPND. IQ domains follow at residues 699–728 and 722–751; these read KHSI…SAVE and MKHS…AVDV. The 175-residue stretch at 850–1024 folds into the TH1 domain; the sequence is KDNYPQSVPR…NGHLSVVAPR (175 aa).

This sequence belongs to the TRAFAC class myosin-kinesin ATPase superfamily. Myosin family. As to quaternary structure, interacts (via its IQ motifs) with calmodulin. In terms of tissue distribution, expressed in brain and the sacculus of the internal ear.

It localises to the cytoplasm. The protein resides in the cell membrane. The protein localises to the cell projection. Its subcellular location is the ruffle membrane. It is found in the cytoplasmic vesicle. It localises to the stereocilium membrane. Myosins are actin-based motor molecules with ATPase activity. Unconventional myosins serve in intracellular movements. Their highly divergent tails are presumed to bind to membranous compartments, which would be moved relative to actin filaments. This Aquarana catesbeiana (American bullfrog) protein is Unconventional myosin-Ic (Myo1c).